The primary structure comprises 421 residues: Testin (421 aa).

One can recognise a PET domain in the interval 92 to 199; the sequence is MILTNPVAAK…GDVKLPCEMD (108 aa). Residues 133–164 are disordered; that stretch reads EKQPVAGSEGAQYRKKQLAKQLPAHDQDPSKC. Positions 155-164 are enriched in basic and acidic residues; the sequence is PAHDQDPSKC. 3 LIM zinc-binding domains span residues 234 to 297, 299 to 359, and 362 to 421; these read YSCY…CDSE, PRCA…NHAV, and QGCH…KMMS.

It belongs to the prickle / espinas / testin family. In terms of assembly, interacts via LIM domain 1 with ZYX. Interacts (via LIM domain 3) with ENAH and VASP. Interacts with ALKBH4, talin, actin, alpha-actinin, GRIP1 and PXN. Interacts (via LIM domain 2) with ACTL7A (via N-terminus). Heterodimer with ACTL7A; the heterodimer interacts with ENAH to form a heterotrimer.

The protein resides in the cytoplasm. It is found in the cell junction. It localises to the focal adhesion. In terms of biological role, scaffold protein that may play a role in cell adhesion, cell spreading and in the reorganization of the actin cytoskeleton. Plays a role in the regulation of cell proliferation. May act as a tumor suppressor. In Microcebus murinus (Gray mouse lemur), this protein is Testin (TES).